The sequence spans 133 residues: Agglutinin alpha chain (133 aa).

Residues 1–133 (GVTFDDGAYT…LDYFSIYLSL (133 aa)) enclose the Jacalin-type lectin domain.

This sequence belongs to the jacalin lectin family. Formed of four alpha chains and four beta chains.

Its function is as follows. D-galactose-specific lectin, binds the T-antigen structure Gal-beta1,3-GalNAc. This chain is Agglutinin alpha chain, found in Maclura pomifera (Osage orange).